Reading from the N-terminus, the 540-residue chain is Glucose-6-phosphate isomerase (540 aa).

Glu350 serves as the catalytic Proton donor. Active-site residues include His381 and Lys503.

The protein belongs to the GPI family.

Its subcellular location is the cytoplasm. The enzyme catalyses alpha-D-glucose 6-phosphate = beta-D-fructose 6-phosphate. The protein operates within carbohydrate biosynthesis; gluconeogenesis. It participates in carbohydrate degradation; glycolysis; D-glyceraldehyde 3-phosphate and glycerone phosphate from D-glucose: step 2/4. Catalyzes the reversible isomerization of glucose-6-phosphate to fructose-6-phosphate. This is Glucose-6-phosphate isomerase from Paraburkholderia phymatum (strain DSM 17167 / CIP 108236 / LMG 21445 / STM815) (Burkholderia phymatum).